A 592-amino-acid polypeptide reads, in one-letter code: MEGSDFLLAGVLFLFAAVAAVPLASRLGIGAVLGYLLAGIAIGPWGLGFISDVDEILHFSELGVVFLMFIIGLELNPSKLWQLRRSIFGVGAAQVLLSAALLAGLLMLTDFAWQAAVVGGIGLAMSSTAMALQLMREKGMNRSESGQLGFSVLLFQDLAVIPALALVPLLAGSADEHFDWMKIGMKVLAFVGMLIGGRYLLRPVFRFIAASGVREVFTAATLLLVLGSALFMDALGLSMALGTFIAGVLLAESEYRHELETAIDPFKGLLLGLFFISVGMSLNLGVLYTHLLWVVISVVVLVAVKILVLYLLARLYGVRSSERMQFAGVLSQGGEFAFVLFSTASSQRLFQGDQMALLLVTVTLSMMTTPLLMKLVDKWLSRQFNGPEEEDEKPWVNDDKPQVIVVGFGRFGQVIGRLLMANKMRITVLERDISAVNLMRKYGYKVYYGDATQVDLLRSAGAEAAESIVITCNEPEDTMKLVEICQQHFPHLHILARARGRVEAHELLQAGVTQFSRETFSSALELGRKTLVTLGMHPHQAQRAQLHFRRLDMRMLRELIPMHADTVQISRAREARRELEEIFQREMQQERR.

13 helical membrane passes run 4–24 (SDFLLAGVLFLFAAVAAVPLA), 29–49 (IGAVLGYLLAGIAIGPWGLGF), 55–75 (EILHFSELGVVFLMFIIGLEL), 87–107 (IFGVGAAQVLLSAALLAGLLM), 115–135 (AAVVGGIGLAMSSTAMALQLM), 152–172 (VLLFQDLAVIPALALVPLLAG), 177–197 (HFDWMKIGMKVLAFVGMLIGG), 207–227 (FIAASGVREVFTAATLLLVLG), 230–250 (LFMDALGLSMALGTFIAGVLL), 268–288 (GLLLGLFFISVGMSLNLGVLY), 291–311 (LLWVVISVVVLVAVKILVLYL), 324–344 (MQFAGVLSQGGEFAFVLFSTA), and 356–376 (ALLLVTVTLSMMTTPLLMKLV). One can recognise an RCK N-terminal domain in the interval 400–519 (KPQVIVVGFG…AGVTQFSRET (120 aa)).

This sequence belongs to the monovalent cation:proton antiporter 2 (CPA2) transporter (TC 2.A.37) family. KefB subfamily. Interacts with the regulatory subunit KefG.

Its subcellular location is the cell inner membrane. Pore-forming subunit of a potassium efflux system that confers protection against electrophiles. Catalyzes K(+)/H(+) antiport. This chain is Glutathione-regulated potassium-efflux system protein KefB, found in Escherichia coli O157:H7.